Consider the following 412-residue polypeptide: [Pyruvate dehydrogenase (acetyl-transferring)] kinase isozyme 4, mitochondrial (412 aa).

A Histidine kinase domain is found at 138–368 (IIEYKDSCTV…DAIIYLKALS (231 aa)). Residues 254–261 (ELFKNAMR), aspartate 293, 312–313 (ST), and 329–334 (GFGYGL) contribute to the ATP site.

It belongs to the PDK/BCKDK protein kinase family. Homodimer. Interacts with the pyruvate dehydrogenase complex subunit DLAT, and is part of the multimeric pyruvate dehydrogenase complex that contains multiple copies of pyruvate dehydrogenase (E1), dihydrolipoamide acetyltransferase (DLAT, E2) and lipoamide dehydrogenase (DLD, E3). Detected in heart, white adipose tissue and muscle.

The protein localises to the mitochondrion matrix. It catalyses the reaction L-seryl-[pyruvate dehydrogenase E1 alpha subunit] + ATP = O-phospho-L-seryl-[pyruvate dehydrogenase E1 alpha subunit] + ADP + H(+). In terms of biological role, kinase that plays a key role in regulation of glucose and fatty acid metabolism and homeostasis via phosphorylation of the pyruvate dehydrogenase subunits PDHA1 and PDHA2. This inhibits pyruvate dehydrogenase activity, and thereby regulates metabolite flux through the tricarboxylic acid cycle, down-regulates aerobic respiration and inhibits the formation of acetyl-coenzyme A from pyruvate. Inhibition of pyruvate dehydrogenase decreases glucose utilization and increases fat metabolism in response to prolonged fasting and starvation. Plays an important role in maintaining normal blood glucose levels under starvation, and is involved in the insulin signaling cascade. Via its regulation of pyruvate dehydrogenase activity, plays an important role in maintaining normal blood pH and in preventing the accumulation of ketone bodies under starvation. In the fed state, mediates cellular responses to glucose levels and to a high-fat diet. Regulates both fatty acid oxidation and de novo fatty acid biosynthesis. Plays a role in the generation of reactive oxygen species. Protects detached epithelial cells against anoikis. Plays a role in cell proliferation via its role in regulating carbohydrate and fatty acid metabolism. This Rhinolophus ferrumequinum (Greater horseshoe bat) protein is [Pyruvate dehydrogenase (acetyl-transferring)] kinase isozyme 4, mitochondrial (PDK4).